Here is a 160-residue protein sequence, read N- to C-terminus: Major strawberry allergen Fra a 1.05 (160 aa).

The protein belongs to the BetVI family. In terms of processing, phosphorylated in vivo. Phosphorylation prevents its activity as ribonuclease.

Its function is as follows. Possesses ribonuclease activity in vitro. This Fragaria ananassa (Strawberry) protein is Major strawberry allergen Fra a 1.05.